The primary structure comprises 406 residues: Ribulose bisphosphate carboxylase large chain (406 aa).

Substrate contacts are provided by asparagine 101 and threonine 151. Lysine 153 acts as the Proton acceptor in catalysis. Position 155 (lysine 155) interacts with substrate. 3 residues coordinate Mg(2+): lysine 179, aspartate 181, and glutamate 182. The residue at position 179 (lysine 179) is an N6-carboxylysine. Histidine 272 acts as the Proton acceptor in catalysis. Substrate is bound by residues arginine 273, histidine 305, and serine 357.

This sequence belongs to the RuBisCO large chain family. Type I subfamily. As to quaternary structure, heterohexadecamer of 8 large chains and 8 small chains; disulfide-linked. The disulfide link is formed within the large subunit homodimers. It depends on Mg(2+) as a cofactor. In terms of processing, the disulfide bond which can form in the large chain dimeric partners within the hexadecamer appears to be associated with oxidative stress and protein turnover.

It localises to the plastid. The protein localises to the chloroplast. It carries out the reaction 2 (2R)-3-phosphoglycerate + 2 H(+) = D-ribulose 1,5-bisphosphate + CO2 + H2O. The catalysed reaction is D-ribulose 1,5-bisphosphate + O2 = 2-phosphoglycolate + (2R)-3-phosphoglycerate + 2 H(+). RuBisCO catalyzes two reactions: the carboxylation of D-ribulose 1,5-bisphosphate, the primary event in carbon dioxide fixation, as well as the oxidative fragmentation of the pentose substrate in the photorespiration process. Both reactions occur simultaneously and in competition at the same active site. The protein is Ribulose bisphosphate carboxylase large chain (rbcL) of Trichomanes striatum (Fern).